Reading from the N-terminus, the 1304-residue chain is Myosin-1 (1304 aa).

The segment covering 1–12 (MAIVKRGVRTKN) has biased composition (basic residues). A disordered region spans residues 1-24 (MAIVKRGVRTKNKQSQQPSKSGIK). Positions 36–730 (VGVSDLTLLS…TLFALEDMRD (695 aa)) constitute a Myosin motor domain. 129–136 (GESGAGKT) provides a ligand contact to ATP. Ser364 carries the phosphoserine modification. The tract at residues 413-496 (SIGILDIYGF…PGLFAALNDS (84 aa)) is actin-binding. IQ domains are found at residues 734 to 754 (HNMAARIQRAWRRYIKRKDDA) and 755 to 780 (ARLIQSAWKNKTHGNQFEQLRDYGNG). The region spanning 788-978 (RRRMSMLGSR…TVTVRQGLPG (191 aa)) is the TH1 domain. 2 disordered regions span residues 963–1162 (DSYK…TYKA) and 1214–1304 (ECDP…DDDW). Polar residues-rich tracts occupy residues 964 to 983 (SYKSGTVTVRQGLPGNSQNP) and 1001 to 1012 (RGSNMRSTSSYQ). Low complexity-rich tracts occupy residues 1029-1052 (QPPVQQTQQRVVPPVQSQPKPQAQ), 1072-1096 (QPHAHPEQAAQAAQAAFHHTAPQAQ), and 1120-1140 (PSAPSRPARKTAPAPPAKKNV). A compositionally biased stretch (pro residues) spans 1141-1156 (APPPPPAAASPPPKPK). The region spanning 1155 to 1217 (PKFPTYKAAY…PAAYVVECDP (63 aa)) is the SH3 domain. Composition is skewed to low complexity over residues 1217-1227 (PPANSPAGNAK) and 1236-1256 (LNSASQAQQSQQQAQAPNGAG). Acidic residues predominate over residues 1292-1304 (DSDEEDEEDDDDW).

Belongs to the TRAFAC class myosin-kinesin ATPase superfamily. Myosin family. Phosphorylation of the TEDS site (Ser-364) is required for the polarization of the actin cytoskeleton. Phosphorylation probably activates the myosin-I ATPase activity.

It localises to the cytoplasm. The protein localises to the cytoskeleton. It is found in the actin patch. Its function is as follows. Type-I myosin implicated in the organization of the actin cytoskeleton. Required for proper actin cytoskeleton polarization. At the cell cortex, assembles in patch-like structures together with proteins from the actin-polymerizing machinery and promotes actin assembly. Functions as actin nucleation-promoting factor (NPF) for the Arp2/3 complex. This chain is Myosin-1 (MYO1), found in Debaryomyces hansenii (strain ATCC 36239 / CBS 767 / BCRC 21394 / JCM 1990 / NBRC 0083 / IGC 2968) (Yeast).